A 675-amino-acid polypeptide reads, in one-letter code: Calcium channel YVC1 (675 aa).

Over 1–236 (MVSANGDLHL…PVRLKAPVYQ (236 aa)) the chain is Cytoplasmic. A helical transmembrane segment spans residues 237–257 (NYLQMIFSFLFLGLYTLVVNG). Residues 258–295 (KDSERVQSFDLLESIFYVFNTGFILDELTKLYYIGYAH) lie on the Vacuolar side of the membrane. A helical membrane pass occupies residues 296–316 (LSFWNLFNDTTYLIITFAMGF). Over 317 to 335 (RAMSVTPLNAKYSSEDWDK) the chain is Cytoplasmic. A helical membrane pass occupies residues 336 to 355 (ISYRVLSCAAPFVWSRLLLY). The Vacuolar segment spans residues 356-376 (LESQRFIGIMLVILKHMMKES). The chain crosses the membrane as a helical span at residues 377 to 397 (IVFFFLLFLIMIGFTQGFLGL). The Cytoplasmic portion of the chain corresponds to 398 to 405 (DSADGKRD). Residues 406–426 (ITGPILGNLTITVLGLGSFDV) traverse the membrane as a helical segment. Residues 427–436 (FEEFAPPYAA) are Vacuolar-facing. Residues 437–457 (ILYYGYYFIVSVILLNILIAL) form a helical membrane-spanning segment. Topologically, residues 458-675 (YSTAYQKVID…EKLDIKDKKE (218 aa)) are cytoplasmic. Phosphothreonine is present on Thr636.

This sequence belongs to the transient receptor (TC 1.A.4) family.

The protein localises to the vacuole membrane. Its function is as follows. Required for release of calcium ions from the vacuole in response to hyperosmotic shock. This chain is Calcium channel YVC1, found in Saccharomyces cerevisiae (strain ATCC 204508 / S288c) (Baker's yeast).